A 275-amino-acid chain; its full sequence is Dermonecrotic toxin LamSicTox-alphaIV1iii (275 aa).

The active site involves His5. Residues Glu25 and Asp27 each coordinate Mg(2+). The Nucleophile role is filled by His41. Disulfide bonds link Cys45–Cys51 and Cys47–Cys192. Asp85 is a Mg(2+) binding site.

The protein belongs to the arthropod phospholipase D family. Class II subfamily. It depends on Mg(2+) as a cofactor. As to expression, expressed by the venom gland.

It localises to the secreted. The enzyme catalyses an N-(acyl)-sphingosylphosphocholine = an N-(acyl)-sphingosyl-1,3-cyclic phosphate + choline. It catalyses the reaction an N-(acyl)-sphingosylphosphoethanolamine = an N-(acyl)-sphingosyl-1,3-cyclic phosphate + ethanolamine. It carries out the reaction a 1-acyl-sn-glycero-3-phosphocholine = a 1-acyl-sn-glycero-2,3-cyclic phosphate + choline. The catalysed reaction is a 1-acyl-sn-glycero-3-phosphoethanolamine = a 1-acyl-sn-glycero-2,3-cyclic phosphate + ethanolamine. Dermonecrotic toxins cleave the phosphodiester linkage between the phosphate and headgroup of certain phospholipids (sphingolipid and lysolipid substrates), forming an alcohol (often choline) and a cyclic phosphate. This toxin acts on sphingomyelin (SM). It may also act on ceramide phosphoethanolamine (CPE), lysophosphatidylcholine (LPC) and lysophosphatidylethanolamine (LPE), but not on lysophosphatidylserine (LPS), and lysophosphatidylglycerol (LPG). It acts by transphosphatidylation, releasing exclusively cyclic phosphate products as second products. Induces dermonecrosis, hemolysis, increased vascular permeability, edema, inflammatory response, and platelet aggregation. The polypeptide is Dermonecrotic toxin LamSicTox-alphaIV1iii (Loxosceles amazonica (Recluse spider)).